The primary structure comprises 520 residues: MEELQGYLEKDRSRQQHFLYPLLFQEYIYALAHNHGVNGSIFYEPVEVFGYDNKSSLVLVKRLITRIYQQNYLISLVNDSNQNRFVEYNHNNFFXSHFHSQMISESFAIIVEIPFSLRLVSYFEEKEIPKYHNLRSIHSIFPFLEDKLSHLNYVSDILIPHPIHMEILVQILQCWIQDVPFLHLLRFFLHEYHNLNSLLITQKKSIYVFSKENKRVFRFLYNFYVFEWEFLFVFIRKQSSYLRLTSSGTFLERTHFYEKIEHLKIEHFVVVCRNFFQRTLWFCKDPFMHYVRYQGKAILASKGTHLLMKKWKYLFFNFWQYYFHVWSQPYRIHINQLSNYSFYFLGYLSSLLLHFSAVRNQMLKNSFLIDTITKKFDTIVPVIFLIGSLAKAKFCTVSGHPISKPIWTDLSDSDILDRFGRICRNLSHYHSGSSKKQSLYRIKYILRLSCARTLARKHKSTVRTFLRRSGSGLLEEFFTEEEQVLSLIFPKTTPFILHGSHRERIWYLDIIRINDLVNHS.

This sequence belongs to the intron maturase 2 family. MatK subfamily.

Its subcellular location is the plastid. The protein localises to the chloroplast. Usually encoded in the trnK tRNA gene intron. Probably assists in splicing its own and other chloroplast group II introns. This Ruscus aculeatus (Butcher's broom) protein is Maturase K.